Consider the following 232-residue polypeptide: NAD(P)H-hydrate epimerase (232 aa).

In terms of domain architecture, YjeF N-terminal spans 9–219; that stretch reads AISVDEELFN…KLQDKYAMEL (211 aa). 62 to 66 contacts (6S)-NADPHX; the sequence is NNGGD. K(+)-binding residues include Asn63 and Asp127. (6S)-NADPHX-binding positions include 131–137 and Asp160; that span reads GFSFKPP. Ser163 lines the K(+) pocket.

The protein belongs to the NnrE/AIBP family. K(+) is required as a cofactor.

It carries out the reaction (6R)-NADHX = (6S)-NADHX. It catalyses the reaction (6R)-NADPHX = (6S)-NADPHX. Catalyzes the epimerization of the S- and R-forms of NAD(P)HX, a damaged form of NAD(P)H that is a result of enzymatic or heat-dependent hydration. This is a prerequisite for the S-specific NAD(P)H-hydrate dehydratase to allow the repair of both epimers of NAD(P)HX. The sequence is that of NAD(P)H-hydrate epimerase from Aedes aegypti (Yellowfever mosquito).